A 353-amino-acid polypeptide reads, in one-letter code: UDP-3-O-acylglucosamine N-acyltransferase (353 aa).

The Proton acceptor role is filled by His246.

This sequence belongs to the transferase hexapeptide repeat family. LpxD subfamily. In terms of assembly, homotrimer.

The enzyme catalyses a UDP-3-O-[(3R)-3-hydroxyacyl]-alpha-D-glucosamine + a (3R)-hydroxyacyl-[ACP] = a UDP-2-N,3-O-bis[(3R)-3-hydroxyacyl]-alpha-D-glucosamine + holo-[ACP] + H(+). It participates in bacterial outer membrane biogenesis; LPS lipid A biosynthesis. Its function is as follows. Catalyzes the N-acylation of UDP-3-O-acylglucosamine using 3-hydroxyacyl-ACP as the acyl donor. Is involved in the biosynthesis of lipid A, a phosphorylated glycolipid that anchors the lipopolysaccharide to the outer membrane of the cell. This Chlorobaculum tepidum (strain ATCC 49652 / DSM 12025 / NBRC 103806 / TLS) (Chlorobium tepidum) protein is UDP-3-O-acylglucosamine N-acyltransferase.